The chain runs to 259 residues: Protein CWC15 homolog (259 aa).

Residues 1–182 (MTTAARPTFD…EKKQEDERIR (182 aa)) form a disordered region. The segment covering 52–71 (DENRNRDFRKELEEREREAR) has biased composition (basic and acidic residues). 2 stretches are compositionally biased toward low complexity: residues 72–82 (SGTGATSSSSG) and 114–126 (QQQAQQAAQQQAA). A compositionally biased stretch (acidic residues) spans 129-150 (DADEPLDNDSSDSDSDSDDDDA). Positions 150 to 182 (AALLAELQKIKQERLQETARRESEKKQEDERIR) form a coiled coil. The segment covering 157–182 (QKIKQERLQETARRESEKKQEDERIR) has biased composition (basic and acidic residues).

This sequence belongs to the CWC15 family.

Its function is as follows. Involved in pre-mRNA splicing. The protein is Protein CWC15 homolog (c12.1) of Drosophila melanogaster (Fruit fly).